We begin with the raw amino-acid sequence, 161 residues long: Ragulator complex protein LAMTOR1 (161 aa).

Residues 1 to 43 form a disordered region; it reads MGCCYSSENEDSDQDQEERKLLLDPSNTPTKALNGAEPSYHSL. A lipid anchor (N-myristoyl glycine) is attached at glycine 2. 2 S-palmitoyl cysteine lipidation sites follow: cysteine 3 and cysteine 4. Lysine 20 participates in a covalent cross-link: Glycyl lysine isopeptide (Lys-Gly) (interchain with G-Cter in ubiquitin). Threonine 28 carries the post-translational modification Phosphothreonine. Residue lysine 31 forms a Glycyl lysine isopeptide (Lys-Gly) (interchain with G-Cter in ubiquitin) linkage. Phosphoserine occurs at positions 42 and 56. Residue lysine 60 forms a Glycyl lysine isopeptide (Lys-Gly) (interchain with G-Cter in ubiquitin) linkage. Serine 98 bears the Phosphoserine mark. Glycyl lysine isopeptide (Lys-Gly) (interchain with G-Cter in ubiquitin) cross-links involve residues lysine 103 and lysine 104. Positions 121-161 are interaction with LAMTOR2 and LAMTOR3; sequence SEPIPFSDLQQVSRIAAYAYSALSQIRVDAKEELVVQFGIP. Serine 141 is subject to Phosphoserine.

It belongs to the LAMTOR1 family. Part of the Ragulator complex composed of LAMTOR1, LAMTOR2, LAMTOR3, LAMTOR4 and LAMTOR5. LAMTOR4 and LAMTOR5 form a heterodimer that interacts, through LAMTOR1, with a LAMTOR2, LAMTOR3 heterodimer. Interacts with LAMTOR2 and LAMTOR3; the interaction is direct. The Ragulator complex interacts with both the mTORC1 complex and heterodimers constituted of the Rag GTPases RagA/RRAGA, RagB/RRAGB, RagC/RRAGC and RagD/RRAGD; regulated by amino acid availability. The Ragulator complex interacts with SLC38A9; the probable amino acid sensor. Component of the lysosomal folliculin complex (LFC), composed of FLCN, FNIP1 (or FNIP2), RagA/RRAGA or RagB/RRAGB GDP-bound, RagC/RRAGC or RagD/RRAGD GTP-bound, and Ragulator. Associates with the lysosomal V-ATPase complex; interaction promotes the guanine nucleotide exchange factor (GEF) of the Ragulator complex. Interacts with MMP14. Interacts with CDKN1B; prevents the interaction of CDKN1B with RHOA leaving RHOA in a form accessible to activation by ARHGEF2. Interacts with PIP4P1. N-terminal myristoylation and palmitoylation mediates its recruitment to lysosome membranes, thereby promoting localization of the Ragulator complex to lysosomes. N-myristoylation by NMT1 is required for palmitoylation at Cys-3 and Cys-4. May be palmitoylated by ZDHHC3. In terms of processing, ubiquitinated at Lys-60, Lys-103 and Lys-104 by UBE3A, promoting its degradation by the proteasome. Ubiquitination at Lys-20 impairs the association with the lysosomal V-ATPase complex. Deubiquitination at Lys-20 by USP32 promotes the association with the lysosomal V-ATPase complex and subsequent activation of the mTORC1 complex. Ubiquitously expressed.

The protein localises to the lysosome membrane. The protein resides in the late endosome membrane. In terms of biological role, key component of the Ragulator complex, a multiprotein complex involved in amino acid sensing and activation of mTORC1, a signaling complex promoting cell growth in response to growth factors, energy levels, and amino acids. Activated by amino acids through a mechanism involving the lysosomal V-ATPase, the Ragulator plays a dual role for the small GTPases Rag (RagA/RRAGA, RagB/RRAGB, RagC/RRAGC and/or RagD/RRAGD): it (1) acts as a guanine nucleotide exchange factor (GEF), activating the small GTPases Rag and (2) mediates recruitment of Rag GTPases to the lysosome membrane. Activated Ragulator and Rag GTPases function as a scaffold recruiting mTORC1 to lysosomes where it is in turn activated. LAMTOR1 is directly responsible for anchoring the Ragulator complex to the lysosomal membrane. LAMTOR1 wraps around the other subunits of the Ragulator complex to hold them in place and interacts with the Rag GTPases, thereby playing a key role in the recruitment of the mTORC1 complex to lysosomes. Also involved in the control of embryonic stem cells differentiation via non-canonical RagC/RRAGC and RagD/RRAGD activation: together with FLCN, it is necessary to recruit and activate RagC/RRAGC and RagD/RRAGD at the lysosomes, and to induce exit of embryonic stem cells from pluripotency via non-canonical, mTOR-independent TFE3 inactivation. Also required for late endosomes/lysosomes biogenesis it may regulate both the recycling of receptors through endosomes and the MAPK signaling pathway through recruitment of some of its components to late endosomes. May be involved in cholesterol homeostasis regulating LDL uptake and cholesterol release from late endosomes/lysosomes. May also play a role in RHOA activation. The sequence is that of Ragulator complex protein LAMTOR1 (Lamtor1) from Rattus norvegicus (Rat).